The following is an 845-amino-acid chain: Alanine--tRNA ligase (845 aa).

Zn(2+) contacts are provided by histidine 552, histidine 556, cysteine 653, and histidine 657.

This sequence belongs to the class-II aminoacyl-tRNA synthetase family. It depends on Zn(2+) as a cofactor.

The protein localises to the cytoplasm. It carries out the reaction tRNA(Ala) + L-alanine + ATP = L-alanyl-tRNA(Ala) + AMP + diphosphate. Functionally, catalyzes the attachment of alanine to tRNA(Ala) in a two-step reaction: alanine is first activated by ATP to form Ala-AMP and then transferred to the acceptor end of tRNA(Ala). Also edits incorrectly charged Ser-tRNA(Ala) and Gly-tRNA(Ala) via its editing domain. This is Alanine--tRNA ligase from Campylobacter fetus subsp. fetus (strain 82-40).